The chain runs to 471 residues: Ankyrin repeat and death domain-containing protein 1A (471 aa).

ANK repeat units follow at residues 19 to 48 (VGRV…AVDE), 52 to 81 (FGMN…KIHC), 85 to 114 (DGLT…DVAL), 120 to 149 (LGRT…DHSV), 153 to 182 (EGNT…DLEE), 186 to 215 (EGLT…TVNA), 219 to 248 (KNLS…CTNV), 251 to 280 (HGAS…DLNA), 284 to 313 (RQQT…DLNL), and 317 to 346 (QGKT…FYKW). The Death domain maps to 379–467 (SVLWRLASRH…DLAELAVASV (89 aa)).

The polypeptide is Ankyrin repeat and death domain-containing protein 1A (ANKDD1A) (Macaca fascicularis (Crab-eating macaque)).